The sequence spans 551 residues: MNNTIINSLIGGDDFIKRSNVFAVDSQIPTLYMPQYISLSGVMTNDGPDNQAIASFEIRDQYITALNHLVLSLELPEVKGMGRFGYVPYVGYKCINHVSVSSCNGVIWEIEGEELYNNCINNTIALKHSGYSSELNDISIGLTPNDTIKEPSTVYVYIKTPFDVEDTFSSLKLSDSKITVTVTFNPVSDIVIRDSSFDFETFNKEFVYVPELSFIGYMVKNVQIKPSFIEKPRRVIGQINQPTATVTEVHAATSLSVYTKPYYGNTDNKFISYPGYSQDEKDYIDAYVSRLLDDLVIVSDGPPTGYPESAEIVEVPEDGVVSIQDADVYVKIDNVPDNMSVYLHTNLLMFGTRKNSFIYNISKKFSAITGTYSDATKRTVFAHISHTINIIDTSIPVSLWTSQRNVYNGDNRSAESKAKDLFINDPFIKGIDFKNKTDIISRLEVRFGNDVLYSENGPISRIYNELLTKSNNGTRTLTFNFTPKIFFRPTTITANVSRGKDKLSVRVVYSTMDINHPIYYVQKQLVVVCNDLYKVSYDQGVSITKIMGDNN.

This sequence belongs to the orthopoxvirus protein OPG125 family. Interacts with the late transcription elongation factor VLTF-4/OPG110. Interacts with the late transcription factors VLTF-1.

The protein resides in the membrane. Acts with RNA polymerase to initiate transcription from late gene promoters. The chain is Scaffold protein OPG125 (OPG125) from Monkeypox virus.